A 311-amino-acid polypeptide reads, in one-letter code: Ribonuclease HIII (311 aa).

An RNase H type-2 domain is found at L93 to H310. The a divalent metal cation site is built by D99, E100, and D204.

Belongs to the RNase HII family. RnhC subfamily. Requires Mn(2+) as cofactor. Mg(2+) serves as cofactor.

Its subcellular location is the cytoplasm. It catalyses the reaction Endonucleolytic cleavage to 5'-phosphomonoester.. Its function is as follows. Endonuclease that specifically degrades the RNA of RNA-DNA hybrids. The polypeptide is Ribonuclease HIII (Geobacillus kaustophilus (strain HTA426)).